A 476-amino-acid polypeptide reads, in one-letter code: Nyctalopin (476 aa).

The signal sequence occupies residues 1-18 (MLILLLHAVVFSLPYTRA). In terms of domain architecture, LRRNT spans 19–57 (TEACLRACPAACTCSHVERGCSVRCDRAGLQRVPQEFPC). 11 LRR repeats span residues 58–79 (EAAS…AFGT), 82–103 (SLRR…AFKG), 106–128 (RLAE…TFAA), 131–154 (RLRR…AELP), 155–177 (ALRE…RGLA), 178–199 (NLTH…SLLG), 202–223 (RLRS…AFGD), 226–247 (ALED…AFRG), 250–271 (RLRT…WFSD), 274–295 (ELEL…AFQN), and 298–319 (GLLA…AFQP). N-linked (GlcNAc...) asparagine glycosylation occurs at asparagine 92. Asparagine 178 carries N-linked (GlcNAc...) asparagine glycosylation. N-linked (GlcNAc...) asparagine glycosylation is present at asparagine 295. The LRRCT domain occupies 331–383 (NPWRCDCQLEWLRDWMEGSGRVADVACASPGSVAGQDLSQVVFERSSDGLCVD). Asparagine 388, asparagine 427, asparagine 434, and asparagine 438 each carry an N-linked (GlcNAc...) asparagine glycan.

The protein belongs to the small leucine-rich proteoglycan (SLRP) family. SLRP class IV subfamily. As to expression, expressed abundantly in retina with lower levels in brain, lung, spleen and testis. Not detected in kidney, heart or liver. In the retina, highest expression found in the inner nuclear layer and ganglion cell layer.

The protein resides in the secreted. It is found in the extracellular space. Its subcellular location is the extracellular matrix. The sequence is that of Nyctalopin (Nyx) from Mus musculus (Mouse).